The primary structure comprises 334 residues: Ferredoxin--NADP reductase (334 aa).

The FAD site is built by aspartate 33, glutamine 41, tyrosine 46, alanine 86, phenylalanine 120, aspartate 286, and threonine 327.

Belongs to the ferredoxin--NADP reductase type 2 family. As to quaternary structure, homodimer. It depends on FAD as a cofactor.

It carries out the reaction 2 reduced [2Fe-2S]-[ferredoxin] + NADP(+) + H(+) = 2 oxidized [2Fe-2S]-[ferredoxin] + NADPH. In Rickettsia typhi (strain ATCC VR-144 / Wilmington), this protein is Ferredoxin--NADP reductase.